A 506-amino-acid polypeptide reads, in one-letter code: Cytochrome P450 94B3 (506 aa).

Residues 2-22 (AFLLSFLILAFLITIIFFLSS) traverse the membrane as a helical segment. Residue C447 coordinates heme.

The protein belongs to the cytochrome P450 family. The cofactor is heme.

The protein localises to the membrane. It localises to the endoplasmic reticulum membrane. It carries out the reaction a jasmonyl-L-amino acid + reduced [NADPH--hemoprotein reductase] + O2 = a 12-hydroxyjasmonyl-L-alpha-amino acid + oxidized [NADPH--hemoprotein reductase] + H2O + H(+). The enzyme catalyses L-isoleucine-(+)-7-isojasmonate + NADPH + O2 + H(+) = L-isoleucine-(+)-12-hydroxy-7-isojasmonate + NADP(+) + H2O. The catalysed reaction is a jasmonyl-L-isoleucinate + NADPH + O2 + H(+) = L-isoleucine-12-hydroxyjasmonate + NADP(+) + H2O. Its function is as follows. Hydroxylase involved in the oxidation of the plant hormone jasmonoyl-L-isoleucine (JA-Ile), a bioactive phytohormone of the jasmonate-mediated signaling pathway. Converts JA-Ile to 12-hydroxy-JA-Ile. Exerts negative feedback control on JA-Ile levels and plays a key role in attenuation of jasmonate responses. Negatively regulates the expression of wound-induced genes TIFY11A/JAZ5, TIFY5A/JAZ8 and TIFY5A/JAZ10. Catalyzes the hydroxylation of jasmonoyl-L-valine (JA-Val), jasmonoyl-L-leucine (JA-Leu) and jasmonoyl-L-phenylalanine (JA-Phe) in vitro. Converts JA-Val, JA-Leu and JA-Phe to 12-hydroxy-JA-Val, 12-hydroxy-JA-Leu and 12-hydroxy-JA-Phe, respectively. This chain is Cytochrome P450 94B3, found in Arabidopsis thaliana (Mouse-ear cress).